The sequence spans 356 residues: L-lactate dehydrogenase A (356 aa).

NAD(+) is bound by residues aspartate 75–lysine 80 and arginine 121. Residues arginine 128, asparagine 160, and arginine 191 each contribute to the substrate site. Asparagine 160 contacts NAD(+). Catalysis depends on histidine 215, which acts as the Proton acceptor. Threonine 270 contacts substrate.

Belongs to the LDH/MDH superfamily. LDH family. In terms of assembly, tetramer that arise from random association of LDH-A and LDH-B.

The catalysed reaction is (S)-lactate + NAD(+) = pyruvate + NADH + H(+). Its pathway is fermentation; pyruvate fermentation to lactate; (S)-lactate from pyruvate: step 1/1. The protein is L-lactate dehydrogenase A of Hordeum vulgare (Barley).